The chain runs to 88 residues: Small ribosomal subunit protein uS15 (88 aa).

It belongs to the universal ribosomal protein uS15 family. As to quaternary structure, part of the 30S ribosomal subunit. Forms a bridge to the 50S subunit in the 70S ribosome, contacting the 23S rRNA.

In terms of biological role, one of the primary rRNA binding proteins, it binds directly to 16S rRNA where it helps nucleate assembly of the platform of the 30S subunit by binding and bridging several RNA helices of the 16S rRNA. Forms an intersubunit bridge (bridge B4) with the 23S rRNA of the 50S subunit in the ribosome. The chain is Small ribosomal subunit protein uS15 from Flavobacterium psychrophilum (strain ATCC 49511 / DSM 21280 / CIP 103535 / JIP02/86).